We begin with the raw amino-acid sequence, 120 residues long: MASRKEALARRANRVRRQLKSVANGRPRLSVHRSSKNIYVQVIDDAAGKTLASASTLDKDLRGSLKTGADTAAAALVGKLVAERATKAGVKEVVFDRGAFIYHGRIKALAEAAREGGLSF.

It belongs to the universal ribosomal protein uL18 family. In terms of assembly, part of the 50S ribosomal subunit; part of the 5S rRNA/L5/L18/L25 subcomplex. Contacts the 5S and 23S rRNAs.

Its function is as follows. This is one of the proteins that bind and probably mediate the attachment of the 5S RNA into the large ribosomal subunit, where it forms part of the central protuberance. This Rhizobium rhizogenes (strain K84 / ATCC BAA-868) (Agrobacterium radiobacter) protein is Large ribosomal subunit protein uL18.